Consider the following 814-residue polypeptide: Rho GTPase-activating protein 44 (814 aa).

The 236-residue stretch at 14–249 folds into the BAR domain; that stretch reads QTVGRAEKTE…IKAQQEAWVE (236 aa). Positions 255-445 constitute a Rho-GAP domain; sequence KPLEEHLMIS…PIIQHADWFF (191 aa). Disordered regions lie at residues 467–493, 528–769, and 784–814; these read ANYS…RPLS, RGSS…MSTD, and STLR…STAL. Over residues 479–489 the composition is skewed to basic and acidic residues; that stretch reads PADRRQPEQAR. The residue at position 493 (Ser493) is a Phosphoserine. Composition is skewed to low complexity over residues 567–581, 598–612, 622–637, 684–704, and 741–752; these read SPAT…SGAS, SPGS…SIQG, PQPA…DQSP, SPYG…LSPA, and SVSLSASSPQST. The tract at residues 727 to 814 is interaction with BST2; it reads KPRQRPTLPP…SEEESESTAL (88 aa). Residues 790 to 805 are compositionally biased toward basic and acidic residues; the sequence is PLEHARRHSATDKRDS. Ser805 bears the Phosphoserine mark. The PDZ-binding signature appears at 811 to 814; the sequence is STAL.

As to quaternary structure, interacts with BST2 (via cytoplasmic domain). Interacts (probably via PDZ-binding motif) with SHANK3 (via PDZ domain); the interaction takes place in dendritic spines and promotes GRIA1 exocytosis. Specifically expressed in brain (at protein level). Detected in olfactory bulb, cortex, hippocampus, diencephalon and cerebellum (at protein level). Expressed in hippocampal neurons (at protein level).

The protein localises to the cell projection. It is found in the dendritic spine. The protein resides in the recycling endosome. It localises to the presynapse. Its subcellular location is the dendrite. GTPase-activating protein (GAP) that stimulates the GTPase activity of Rho-type GTPases. Thereby, controls Rho-type GTPases cycling between their active GTP-bound and inactive GDP-bound states. Acts as a GAP at least for CDC42 and RAC1. In neurons, is involved in dendritic spine formation and synaptic plasticity in a specific RAC1-GAP activity. Limits the initiation of exploratory dendritic filopodia. Recruited to actin-patches that seed filopodia, binds specifically to plasma membrane sections that are deformed inward by acto-myosin mediated contractile forces. Acts through GAP activity on RAC1 to reduce actin polymerization necessary for filopodia formation. In association with SHANK3, promotes GRIA1 exocytosis from recycling endosomes and spine morphological changes associated to long-term potentiation. This chain is Rho GTPase-activating protein 44, found in Mus musculus (Mouse).